We begin with the raw amino-acid sequence, 100 residues long: Urease subunit gamma (100 aa).

The protein belongs to the urease gamma subunit family. As to quaternary structure, heterotrimer of UreA (gamma), UreB (beta) and UreC (alpha) subunits. Three heterotrimers associate to form the active enzyme.

The protein localises to the cytoplasm. The catalysed reaction is urea + 2 H2O + H(+) = hydrogencarbonate + 2 NH4(+). Its pathway is nitrogen metabolism; urea degradation; CO(2) and NH(3) from urea (urease route): step 1/1. This is Urease subunit gamma from Trichormus variabilis (strain ATCC 29413 / PCC 7937) (Anabaena variabilis).